Consider the following 534-residue polypeptide: Dual specificity calcium/calmodulin-dependent 3',5'-cyclic nucleotide phosphodiesterase 1B (534 aa).

The tract at residues 1–21 (MELSPRSPPEMLESDCPSPLE) is disordered. Phosphoserine occurs at positions 7 and 14. Calmodulin-binding regions lie at residues 27–47 (SKKM…QLEN) and 116–139 (EKPK…MFRR). The PDEase domain maps to 144–501 (VGPTYSTAVL…QKWKERAASG (358 aa)). His221 (proton donor) is an active-site residue. 4 residues coordinate Zn(2+): His225, His261, Asp262, and Asp368. Asp262 serves as a coordination point for Mg(2+). 2 disordered regions span residues 442 to 473 (VQPT…GDPN) and 494 to 534 (WKER…GNLD). Residues 453–462 (KNQPSFQWRQ) are compositionally biased toward polar residues. A phosphoserine mark is found at Ser464 and Ser512.

The protein belongs to the cyclic nucleotide phosphodiesterase family. PDE1 subfamily. As to quaternary structure, homodimer. The cofactor is Zn(2+). Requires Mg(2+) as cofactor. In terms of tissue distribution, expressed in central nervous system regions. Most abundant in basal ganglia. Also found in kidney papilla and adrenal medulla.

It localises to the cytoplasm. The protein resides in the cytosol. It carries out the reaction a nucleoside 3',5'-cyclic phosphate + H2O = a nucleoside 5'-phosphate + H(+). It catalyses the reaction 3',5'-cyclic GMP + H2O = GMP + H(+). The catalysed reaction is 3',5'-cyclic AMP + H2O = AMP + H(+). With respect to regulation, type I PDE are activated by the binding of calmodulin in the presence of Ca(2+). Its function is as follows. Cyclic nucleotide phosphodiesterase with a dual specificity for the second messengers cAMP and cGMP, which are key regulators of many important physiological processes. Has a preference for cGMP as a substrate. This Bos taurus (Bovine) protein is Dual specificity calcium/calmodulin-dependent 3',5'-cyclic nucleotide phosphodiesterase 1B.